Reading from the N-terminus, the 426-residue chain is Probable auxin efflux carrier component 9 (426 aa).

The Extracellular segment spans residues 1–6 (MITGSE). Residues 7–27 (VYQVVEAMAPLYTAAALGYGS) traverse the membrane as a helical segment. Topologically, residues 28-38 (VRWLKAFSNEQ) are cytoplasmic. A helical membrane pass occupies residues 39–59 (CAGINHFVALYAVPVLIFDMV). Residue valine 51 participates in (indol-3-yl)acetate binding. Residues 60–70 (STNNVYKMNGR) are Extracellular-facing. A helical membrane pass occupies residues 71–91 (LIAADTLQKAVLLLGLMAWAL). Topologically, residues 92 to 114 (WERSRARGAGAKAKAAVSSPLQW) are cytoplasmic. A helical transmembrane segment spans residues 115–135 (VITCFSVASLPNTIIMGVPLL). (indol-3-yl)acetate contacts are provided by asparagine 126 and isoleucine 128. Residues 136 to 145 (NGMYGPVSKD) lie on the Extracellular side of the membrane. A helical membrane pass occupies residues 146 to 166 (LMKQIVVMQFCIWYNVIIFLY). (indol-3-yl)acetate is bound at residue tyrosine 159. At 167–286 (EYMAARRSAS…LLQIPNTYAS (120 aa)) the chain is on the cytoplasmic side. A disordered region spans residues 232–258 (RDGVSGETTAAAKEVSSGEVAPVEEEE). A helical membrane pass occupies residues 287–307 (FLGLIWSLIAFKCGFSMPKIV). Residues 308 to 310 (EDS) lie on the Extracellular side of the membrane. The chain crosses the membrane as a helical span at residues 311 to 331 (LFTIRTTAVGLSMFSSGTFIA). Residues 332–347 (RQSRFVPCGYKIASFS) are Cytoplasmic-facing. A helical transmembrane segment spans residues 348–368 (MVIKFLIGPVVMLFASLVIGM). Residues 369-371 (HGT) lie on the Extracellular side of the membrane. A helical membrane pass occupies residues 372–392 (LLHIAVVQAALPLAVTSFVYA). Position 386 (valine 386) interacts with (indol-3-yl)acetate. Residues 393 to 405 (EEYKVHADIMSTG) are Cytoplasmic-facing. The chain crosses the membrane as a helical span at residues 406–426 (VILGIFISLPVTIVYYILLGL).

Belongs to the auxin efflux carrier (TC 2.A.69.1) family. In terms of assembly, homodimer. In terms of tissue distribution, expressed in roots, leaves and shoot apex. Expressed in roots, stem bases, stems, leaves and young panicles.

The protein resides in the membrane. Functionally, may act as a component of the auxin efflux carrier. This is Probable auxin efflux carrier component 9 from Oryza sativa subsp. japonica (Rice).